The sequence spans 135 residues: uncharacterized protein (135 aa).

In terms of domain architecture, HotDog ACOT-type spans 8 to 123; that stretch reads PKGIIVLKTL…IFIYVAINKT (116 aa).

It belongs to the acyl coenzyme A hydrolase family.

This is an uncharacterized protein from Buchnera aphidicola subsp. Acyrthosiphon pisum (strain APS) (Acyrthosiphon pisum symbiotic bacterium).